We begin with the raw amino-acid sequence, 179 residues long: ATP synthase subunit delta (179 aa).

It belongs to the ATPase delta chain family. As to quaternary structure, F-type ATPases have 2 components, F(1) - the catalytic core - and F(0) - the membrane proton channel. F(1) has five subunits: alpha(3), beta(3), gamma(1), delta(1), epsilon(1). F(0) has three main subunits: a(1), b(2) and c(10-14). The alpha and beta chains form an alternating ring which encloses part of the gamma chain. F(1) is attached to F(0) by a central stalk formed by the gamma and epsilon chains, while a peripheral stalk is formed by the delta and b chains.

It localises to the cell membrane. Functionally, f(1)F(0) ATP synthase produces ATP from ADP in the presence of a proton or sodium gradient. F-type ATPases consist of two structural domains, F(1) containing the extramembraneous catalytic core and F(0) containing the membrane proton channel, linked together by a central stalk and a peripheral stalk. During catalysis, ATP synthesis in the catalytic domain of F(1) is coupled via a rotary mechanism of the central stalk subunits to proton translocation. In terms of biological role, this protein is part of the stalk that links CF(0) to CF(1). It either transmits conformational changes from CF(0) to CF(1) or is implicated in proton conduction. This Clostridium botulinum (strain Okra / Type B1) protein is ATP synthase subunit delta.